The sequence spans 487 residues: Serine/threonine-protein kinase 4 (487 aa).

M1 carries the post-translational modification N-acetylmethionine. T3 is modified (phosphothreonine). The 252-residue stretch at 30–281 (FDVLEKLGEG…ATQLLQHPFV (252 aa)) folds into the Protein kinase domain. Residues 36–44 (LGEGSYGSV) and K59 contribute to the ATP site. D149 acts as the Proton acceptor in catalysis. A Phosphothreonine; by autocatalysis modification is found at T183. Residue S265 is modified to Phosphoserine. The stretch at 290–310 (LRDLINEAMDVKLKRQESQQR) forms a coiled coil. Basic and acidic residues predominate over residues 303–312 (KRQESQQREV). Residues 303–332 (KRQESQQREVDQDDEENSEEDEMDSGTMVR) form a disordered region. The span at 313 to 326 (DQDDEENSEEDEMD) shows a compositional bias: acidic residues. At S320 the chain carries Phosphoserine. A phosphothreonine mark is found at T340 and T367. A Phosphothreonine; by PKB/AKT1 modification is found at T387. Residues S410 and S414 each carry the phosphoserine modification. Phosphotyrosine is present on Y433. Residues 433–480 (YEFLKSWTVEDLQKRLLALDPMMEQEIEEIRQKYQSKRQPILDAIEAK) enclose the SARAH domain.

Belongs to the protein kinase superfamily. STE Ser/Thr protein kinase family. STE20 subfamily. In terms of assembly, homodimer; mediated via the coiled-coil region. Interacts with NORE1, which inhibits autoactivation. Interacts with and stabilizes SAV1. Interacts with RASSF1. Interacts with FOXO3. Interacts with RASSF2 (via SARAH domain). Interacts with AR, PKB/AKT1, TNNI3 and SIRT1. Interacts with DLG5 (via PDZ domain 3). Interacts with MARK3 and SCRIB in the presence of DLG5. The cofactor is Mg(2+). In terms of processing, autophosphorylated on serine and threonine residues. Phosphorylation at Thr-387 by PKB/AKT1, leads to inhibition of its: kinase activity, nuclear translocation and autophosphorylation at Thr-183. It also diminishes its cleavage by caspases and its ability to phosphorylate FOXO3. Post-translationally, proteolytically cleaved by caspase-3 during apoptosis at Asp-326 and Asp-349 resulting in a 37 kDa or a 39 kDa subunit respectively. The 39 kDa subunit is further cleaved into the 37 kDa form. Proteolytic cleavage results in kinase activation and nuclear translocation of the truncated form (MST1/N). It is less likely that cleavage at Asp-349 is a prerequisite for activation as this site is not conserved in the murine ortholog.

Its subcellular location is the cytoplasm. The protein localises to the nucleus. The catalysed reaction is L-seryl-[protein] + ATP = O-phospho-L-seryl-[protein] + ADP + H(+). The enzyme catalyses L-threonyl-[protein] + ATP = O-phospho-L-threonyl-[protein] + ADP + H(+). Inhibited by the C-terminal non-catalytic region. Activated by caspase-cleavage. Full activation also requires homodimerization and autophosphorylation of Thr-183. Activated by RASSF1 which acts by preventing its dephosphorylation. Functionally, stress-activated, pro-apoptotic kinase which, following caspase-cleavage, enters the nucleus and induces chromatin condensation followed by internucleosomal DNA fragmentation. Key component of the Hippo signaling pathway which plays a pivotal role in organ size control and tumor suppression by restricting proliferation and promoting apoptosis. The core of this pathway is composed of a kinase cascade wherein STK3/MST2 and STK4/MST1, in complex with its regulatory protein SAV1, phosphorylates and activates LATS1/2 in complex with its regulatory protein MOB1, which in turn phosphorylates and inactivates YAP1 oncoprotein and WWTR1/TAZ. Phosphorylation of YAP1 by LATS2 inhibits its translocation into the nucleus to regulate cellular genes important for cell proliferation, cell death, and cell migration. STK3/MST2 and STK4/MST1 are required to repress proliferation of mature hepatocytes, to prevent activation of facultative adult liver stem cells (oval cells), and to inhibit tumor formation. Phosphorylates 'Ser-14' of histone H2B (H2BS14ph) during apoptosis. Phosphorylates FOXO3 upon oxidative stress, which results in its nuclear translocation and cell death initiation. Phosphorylates MOBKL1A, MOBKL1B and RASSF2. Phosphorylates TNNI3 (cardiac Tn-I) and alters its binding affinity to TNNC1 (cardiac Tn-C) and TNNT2 (cardiac Tn-T). Phosphorylates FOXO1 on 'Ser-212' and regulates its activation and stimulates transcription of PMAIP1 in a FOXO1-dependent manner. Phosphorylates SIRT1 and inhibits SIRT1-mediated p53/TP53 deacetylation, thereby promoting p53/TP53 dependent transcription and apoptosis upon DNA damage. Acts as an inhibitor of PKB/AKT1. Phosphorylates AR on 'Ser-650' and suppresses its activity by intersecting with PKB/AKT1 signaling and antagonizing formation of AR-chromatin complexes. The sequence is that of Serine/threonine-protein kinase 4 (STK4) from Papio anubis (Olive baboon).